We begin with the raw amino-acid sequence, 372 residues long: Alanine racemase (372 aa).

Residue Lys33 is the Proton acceptor; specific for D-alanine of the active site. At Lys33 the chain carries N6-(pyridoxal phosphate)lysine. Arg131 is a binding site for substrate. Tyr261 serves as the catalytic Proton acceptor; specific for L-alanine. Met309 serves as a coordination point for substrate.

This sequence belongs to the alanine racemase family. Pyridoxal 5'-phosphate is required as a cofactor.

It carries out the reaction L-alanine = D-alanine. It participates in amino-acid biosynthesis; D-alanine biosynthesis; D-alanine from L-alanine: step 1/1. Its function is as follows. Catalyzes the interconversion of L-alanine and D-alanine. May also act on other amino acids. The sequence is that of Alanine racemase (alr) from Salinispora tropica (strain ATCC BAA-916 / DSM 44818 / JCM 13857 / NBRC 105044 / CNB-440).